A 154-amino-acid chain; its full sequence is Cysteine-rich DPF motif domain-containing protein 1 (154 aa).

Belongs to the CDPF1 family.

The sequence is that of Cysteine-rich DPF motif domain-containing protein 1 from Drosophila melanogaster (Fruit fly).